Consider the following 525-residue polypeptide: 2-isopropylmalate synthase (525 aa).

Residues 12–274 (VVIFDTTLRD…WNKIDTTQLT (263 aa)) form the Pyruvate carboxyltransferase domain. Positions 21, 209, 211, and 245 each coordinate Mn(2+). Positions 398–525 (KLLSLSVIAG…GHGASAAAAS (128 aa)) are regulatory domain.

It belongs to the alpha-IPM synthase/homocitrate synthase family. LeuA type 1 subfamily. Homodimer. The cofactor is Mn(2+).

The protein localises to the cytoplasm. The catalysed reaction is 3-methyl-2-oxobutanoate + acetyl-CoA + H2O = (2S)-2-isopropylmalate + CoA + H(+). It participates in amino-acid biosynthesis; L-leucine biosynthesis; L-leucine from 3-methyl-2-oxobutanoate: step 1/4. In terms of biological role, catalyzes the condensation of the acetyl group of acetyl-CoA with 3-methyl-2-oxobutanoate (2-ketoisovalerate) to form 3-carboxy-3-hydroxy-4-methylpentanoate (2-isopropylmalate). The polypeptide is 2-isopropylmalate synthase (Bradyrhizobium sp. (strain ORS 278)).